Consider the following 250-residue polypeptide: MAVTKLVLVRHGESQWNNENRFTGWYDVDLSEKGVSEAKAAGKLLKDEGYSFDFAYTSVLKRAIHTLWNILDGLDQAWLPVEKSWKLNERHYGALQGLNKAETAEKYGDEQVKQWRRGFAVTPPALTKDDERYPGHDPRYAKLSEQELPLTESLALTIDRVIPYWNETILPRLKSGERVIIAAHGNSLRALVKYLDNMSEEEILELNIPTGVPLVYEFDENFKPIKHYYLGNADEIAAKAAAVANQGKAK.

Substrate is bound by residues Arg-10–Asn-17, Thr-23–Gly-24, Arg-62, Glu-89–Tyr-92, Lys-100, Arg-116–Arg-117, and Gly-185–Asn-186. Residue His-11 is the Tele-phosphohistidine intermediate of the active site. The active-site Proton donor/acceptor is Glu-89.

Belongs to the phosphoglycerate mutase family. BPG-dependent PGAM subfamily. As to quaternary structure, homodimer.

The enzyme catalyses (2R)-2-phosphoglycerate = (2R)-3-phosphoglycerate. Its pathway is carbohydrate degradation; glycolysis; pyruvate from D-glyceraldehyde 3-phosphate: step 3/5. Its function is as follows. Catalyzes the interconversion of 2-phosphoglycerate and 3-phosphoglycerate. The sequence is that of 2,3-bisphosphoglycerate-dependent phosphoglycerate mutase from Cronobacter sakazakii (strain ATCC BAA-894) (Enterobacter sakazakii).